Consider the following 259-residue polypeptide: MADS-box protein ZMM17 (259 aa).

Residues 1–61 (MGRGKIEIKR…GKMFEYCSPA (61 aa)) enclose the MADS-box domain. The K-box domain occupies 85-175 (DQQILLEMTR…YRMINENQQA (91 aa)). The tract at residues 237–259 (PTQPNLQDPAAPCGGLHGHGLQL) is disordered.

As to expression, strong expression in female inflorescences (ears), but also weak expression in male inflorescences (tassels). At early stages of the development of the female spiklet, expressed in all organ primordia but later restricted to the ovule and the developing silk. At very late stages of development, expression becomes restricted to parts of the silk.

Its subcellular location is the nucleus. In terms of biological role, probable transcription factor. This chain is MADS-box protein ZMM17 (M17), found in Zea mays (Maize).